The primary structure comprises 79 residues: Polcalcin Bra r 1 (79 aa).

EF-hand domains are found at residues 1–36 and 39–71; these read MADA…LGSV and DDVT…NPGL. Ca(2+) contacts are provided by Asp14, Asp16, Asp18, Lys20, Glu25, Asp49, Asp51, Asp53, Asn55, and Glu60.

The chain is Polcalcin Bra r 1 from Brassica campestris (Field mustard).